The chain runs to 456 residues: Argininosuccinate lyase (456 aa).

It belongs to the lyase 1 family. Argininosuccinate lyase subfamily.

It is found in the cytoplasm. The catalysed reaction is 2-(N(omega)-L-arginino)succinate = fumarate + L-arginine. It participates in amino-acid biosynthesis; L-arginine biosynthesis; L-arginine from L-ornithine and carbamoyl phosphate: step 3/3. This Listeria monocytogenes serotype 4b (strain CLIP80459) protein is Argininosuccinate lyase.